The chain runs to 535 residues: Thermosome subunit gamma (535 aa).

Belongs to the TCP-1 chaperonin family. Forms a Heterooligomeric complex of two stacked eight-membered rings.

Molecular chaperone; binds unfolded polypeptides in vitro, and has a weak ATPase activity. The chain is Thermosome subunit gamma (thsC) from Saccharolobus solfataricus (strain ATCC 35092 / DSM 1617 / JCM 11322 / P2) (Sulfolobus solfataricus).